The primary structure comprises 210 residues: Tetraspanin-31 (210 aa).

Residues 1 to 12 lie on the Cytoplasmic side of the membrane; sequence MVCGGFACSKNA. Residues 13-33 traverse the membrane as a helical segment; the sequence is LCALNVVYMLVSLLLIGVAAW. Over 34–44 the chain is Extracellular; it reads GKGLGLVSSIH. The chain crosses the membrane as a helical span at residues 45–65; sequence IIGGVIAVGVFLLLIAVAGLV. Topologically, residues 66–72 are cytoplasmic; the sequence is GAVNHHQ. A helical membrane pass occupies residues 73–93; that stretch reads VLLFFYMIILGLVFIFQFVIS. Over 94-173 the chain is Extracellular; sequence CSCLAINRSK…FLKHSDEALK (80 aa). 4 N-linked (GlcNAc...) asparagine glycosylation sites follow: Asn100, Asn109, Asn117, and Asn134. A helical transmembrane segment spans residues 174–194; it reads ILGGVGLFFSFTEILGVWLAM. At 195–210 the chain is on the cytoplasmic side; it reads RFRNQKDPRANPSAFL.

This sequence belongs to the tetraspanin (TM4SF) family.

Its subcellular location is the membrane. The chain is Tetraspanin-31 (TSPAN31) from Homo sapiens (Human).